The following is a 1117-amino-acid chain: Sodium-driven chloride bicarbonate exchanger (1117 aa).

2 disordered regions span residues 1-23 (MEIK…EEAV) and 58-97 (GRKS…TPSQ). The Cytoplasmic portion of the chain corresponds to 1-508 (MEIKDQGAQM…DFRDAFSLQC (508 aa)). The segment covering 59-76 (RKSHRRHRHRGHKHRKRD) has biased composition (basic residues). Serine 89 carries the post-translational modification Phosphoserine. Residue threonine 94 is modified to Phosphothreonine. Serine 275 is modified (phosphoserine). Disordered stretches follow at residues 282 to 309 (DFSK…KGPP) and 431 to 476 (WDPS…PELQ). Residues 509 to 529 (LASFLFLYCACMSPVITFGGL) form a helical membrane-spanning segment. The Extracellular portion of the chain corresponds to 530-537 (LGEATEGR). A helical transmembrane segment spans residues 538–558 (ISAIESLFGASMTGIAYSLFG). Residues 559-561 (GQP) lie on the Cytoplasmic side of the membrane. The chain crosses the membrane as a helical span at residues 562–582 (LTILGSTGPVLVFEKILFKFC). The Extracellular portion of the chain corresponds to 583–595 (KEYGLSYLSLRAS). Residues 596–616 (IGLWTATLCIILVATDASSLV) traverse the membrane as a helical segment. Residues 617-625 (CYITRFTEE) are Cytoplasmic-facing. Residues 626–646 (AFASLICIIFIYEALEKLFEL) form a helical membrane-spanning segment. Residues 647–719 (SESYPINMHN…VGRACGHGHP (73 aa)) lie on the Extracellular side of the membrane. 3 N-linked (GlcNAc...) asparagine glycosylation sites follow: asparagine 676, asparagine 686, and asparagine 696. Residues 720–740 (YVPDVLFWSVILFFSTVTMSA) traverse the membrane as a helical segment. Topologically, residues 741-761 (TLKQFKTSRYFPTKVRSIVSD) are cytoplasmic. Residues 762-782 (FAVFLTILCMVLIDYAIGIPS) form a helical membrane-spanning segment. The Extracellular segment spans residues 783–808 (PKLQVPSVFKPTRDDRGWFVTPLGPN). Residues 809–829 (PWWTIIAAIIPALLCTILIFM) form a helical membrane-spanning segment. The Cytoplasmic portion of the chain corresponds to 830-854 (DQQITAVIINRKEHKLKKGCGYHLD). Residues 855-875 (LLMVAVMLGVCSIMGLPWFVA) traverse the membrane as a helical segment. Over 876–911 (ATVLSITHVNSLKLESECSAPGEQPKFLGIREQRVT) the chain is Extracellular. Residues 912–932 (GLMIFILMGSSVFMTSILKFI) form a helical membrane-spanning segment. At 933–934 (PM) the chain is on the cytoplasmic side. The helical transmembrane segment at 935-955 (PVLYGVFLYMGASSLKGIQLF) threads the bilayer. Topologically, residues 956-997 (DRIKLFWMPAKHQPDFIYLRHVPLRKVHLFTVIQMSCLGLLW) are extracellular. A helical transmembrane segment spans residues 998 to 1018 (IIKVSRAAIVFPMMVLALVFV). The Cytoplasmic portion of the chain corresponds to 1019–1117 (RKLMDFLFTK…SRFPSKSSPS (99 aa)). Phosphoserine occurs at positions 1056 and 1084.

This sequence belongs to the anion exchanger (TC 2.A.31) family. Post-translationally, N-glycosylated. In terms of tissue distribution, in the brain, detected in cerebral cortex, subcortex, cerebellum, hippocampus and medulla (at protein level). Expressed in neurons but not in astrocytes (at protein level). Isoforms starting with Met-Glu-Ile-Lys are found predominantly in the brain with lower levels in the eye while isoforms starting with Met-Cys-Asp-Leu are most abundant in the kidney with lower levels in the duodenum, jejunum and ileum (at protein level). In the kidney, isoforms starting with Met-Cys-Asp-Leu are primarily expressed in the cortex, the outer stripe of the outer medulla and the inner stripe of the outer medulla (ISOM) but are not detectable in the inner medulla (IM) while isoforms starting with Met-Glu-Ile-Lys are predominantly expressed in the ISOM and IM. Expressed in the brain, in the hippocampus as well as in dentate gyrus, cortical layers, cerebellum, olfactory bulb and in the epithelial cells of the choroid plexus. Detected in pituitary, testis, kidney and ileum. Detected also in spleen and lung. Mainly expressed in the jejenum (at protein level).

Its subcellular location is the basolateral cell membrane. It is found in the apical cell membrane. The protein localises to the cell projection. It localises to the dendrite. The protein resides in the axon. Its subcellular location is the perikaryon. It is found in the presynapse. The protein localises to the postsynapse. The catalysed reaction is 2 hydrogencarbonate(out) + chloride(in) + Na(+)(out) = 2 hydrogencarbonate(in) + chloride(out) + Na(+)(in). Sodium/bicarbonate cotransporter which plays an important role in regulating intracellular pH. Has been shown to act as a sodium/bicarbonate cotransporter in exchange for intracellular chloride. Has also been shown to act as a sodium/biocarbonate cotransporter which does not couple net influx of bicarbonate to net efflux of chloride, with the observed chloride efflux being due to chloride self-exchange. Controls neuronal pH and may contribute to the secretion of cerebrospinal fluid. Acting on presynaptic intracellular pH, it promotes GABA release, reduces the excitability of CA1 pyramidal neurons, and modulates short-term synaptic plasticity. Required in retinal cells to maintain normal pH which is necessary for normal vision. In the kidney, likely to mediate bicarbonate reclamation in the apical membrane of the proximal tubules. Its function is as follows. Sodium/bicarbonate cotransporter which mediates cotransport of sodium and bicarbonate in association with an efflux of intracellular chloride and is involved in NaCl absorption in the small intestine. The polypeptide is Sodium-driven chloride bicarbonate exchanger (Rattus norvegicus (Rat)).